An 876-amino-acid chain; its full sequence is Valine--tRNA ligase (876 aa).

Residues 43–53 carry the 'HIGH' region motif; that stretch reads PNVTGVLHMGH. The short motif at 533 to 537 is the 'KMSKS' region element; it reads KMSKS. An ATP-binding site is contributed by Lys-536. The stretch at 804–876 forms a coiled coil; the sequence is GALIDVEEEI…DSLNQLQSTK (73 aa).

Belongs to the class-I aminoacyl-tRNA synthetase family. ValS type 1 subfamily. Monomer.

It localises to the cytoplasm. The catalysed reaction is tRNA(Val) + L-valine + ATP = L-valyl-tRNA(Val) + AMP + diphosphate. In terms of biological role, catalyzes the attachment of valine to tRNA(Val). As ValRS can inadvertently accommodate and process structurally similar amino acids such as threonine, to avoid such errors, it has a 'posttransfer' editing activity that hydrolyzes mischarged Thr-tRNA(Val) in a tRNA-dependent manner. In Porphyromonas gingivalis (strain ATCC 33277 / DSM 20709 / CIP 103683 / JCM 12257 / NCTC 11834 / 2561), this protein is Valine--tRNA ligase.